The chain runs to 72 residues: Late effector protein 1 (72 aa).

The N-terminal stretch at 1–22 (MKCYLVVVVAALCTLVAQGSVG) is a signal peptide. Asparagine 66 carries N-linked (GlcNAc...) asparagine glycosylation.

The protein belongs to the lep1 family. Interacts at the cell wall with secreted rep1 repellent peptides.

Its subcellular location is the secreted. The protein resides in the cell wall. Its function is as follows. Core effector contributing to spore formation and tumor formation at the host plant. Modulates surface hydrophobicity promoting cell-cell or cell-surface contacts. Lep1 and rep1 interact in aerial hyphae to form a strong hydrophobic layer. Plays a crucial role in hyphal aggregation that might be a prerequisite for strong proliferation of diploid cells and for induction of the morphological changes associated with spore formation. The chain is Late effector protein 1 from Sporisorium reilianum (strain SRZ2) (Maize head smut fungus).